The chain runs to 185 residues: Ribosome-recycling factor (185 aa).

It belongs to the RRF family.

It localises to the cytoplasm. In terms of biological role, responsible for the release of ribosomes from messenger RNA at the termination of protein biosynthesis. May increase the efficiency of translation by recycling ribosomes from one round of translation to another. In Wolbachia sp. subsp. Drosophila simulans (strain wRi), this protein is Ribosome-recycling factor.